Reading from the N-terminus, the 90-residue chain is MSITSEKKKNLINTYAIKEDDTGSSFVQCAILTERISNLTEHFKVHKHDHHSKRGLLILIGRRRKHLNYIKRKFGDEAYQQLIEKLGIRK.

This sequence belongs to the universal ribosomal protein uS15 family. Part of the 30S ribosomal subunit. Forms a bridge to the 50S subunit in the 70S ribosome, contacting the 23S rRNA.

Functionally, one of the primary rRNA binding proteins, it binds directly to 16S rRNA where it helps nucleate assembly of the platform of the 30S subunit by binding and bridging several RNA helices of the 16S rRNA. Forms an intersubunit bridge (bridge B4) with the 23S rRNA of the 50S subunit in the ribosome. The polypeptide is Small ribosomal subunit protein uS15 (Wolbachia sp. subsp. Brugia malayi (strain TRS)).